A 231-amino-acid chain; its full sequence is uncharacterized protein (231 aa).

The helical transmembrane segment at 86–106 (LIILFVIGLIITIIGLLMYEP) threads the bilayer.

The protein resides in the membrane. This is an uncharacterized protein from Methanocaldococcus jannaschii (strain ATCC 43067 / DSM 2661 / JAL-1 / JCM 10045 / NBRC 100440) (Methanococcus jannaschii).